The following is a 45-amino-acid chain: Mu-conotoxin-like Cal 12.1.2c (45 aa).

4 disulfide bridges follow: Cys-3–Cys-16, Cys-11–Cys-28, Cys-18–Cys-33, and Cys-27–Cys-39. Pro-23 carries the post-translational modification 4-hydroxyproline. Residues Trp-37 and Trp-38 each carry the 6'-bromotryptophan modification. Pro-40 is modified (4-hydroxyproline). Residue Trp-44 is modified to 6'-bromotryptophan.

As to expression, expressed by the venom duct.

Its subcellular location is the secreted. Functionally, mu-conotoxins block voltage-gated sodium channels. This toxin reversibly blocks voltage-gated sodium channel in cephalopods, with no alteration in the voltage dependence of sodium conductance or on the kinetics of inactivation. This is Mu-conotoxin-like Cal 12.1.2c from Californiconus californicus (California cone).